The following is a 200-amino-acid chain: ATP-dependent Clp protease proteolytic subunit 2 (200 aa).

Residue S101 is the Nucleophile of the active site. Residue H126 is part of the active site.

The protein belongs to the peptidase S14 family. Fourteen ClpP subunits assemble into 2 heptameric rings which stack back to back to give a disk-like structure with a central cavity, resembling the structure of eukaryotic proteasomes.

The protein resides in the cytoplasm. It carries out the reaction Hydrolysis of proteins to small peptides in the presence of ATP and magnesium. alpha-casein is the usual test substrate. In the absence of ATP, only oligopeptides shorter than five residues are hydrolyzed (such as succinyl-Leu-Tyr-|-NHMec, and Leu-Tyr-Leu-|-Tyr-Trp, in which cleavage of the -Tyr-|-Leu- and -Tyr-|-Trp bonds also occurs).. Its function is as follows. Cleaves peptides in various proteins in a process that requires ATP hydrolysis. Has a chymotrypsin-like activity. Plays a major role in the degradation of misfolded proteins. The sequence is that of ATP-dependent Clp protease proteolytic subunit 2 from Prochlorococcus marinus (strain NATL2A).